Consider the following 374-residue polypeptide: N-acetyldiaminopimelate deacetylase (374 aa).

Aspartate 69 is a catalytic residue. Glutamate 128 serves as the catalytic Proton acceptor.

It belongs to the peptidase M20A family. N-acetyldiaminopimelate deacetylase subfamily.

It catalyses the reaction N-acetyl-(2S,6S)-2,6-diaminopimelate + H2O = (2S,6S)-2,6-diaminopimelate + acetate. Its pathway is amino-acid biosynthesis; L-lysine biosynthesis via DAP pathway; LL-2,6-diaminopimelate from (S)-tetrahydrodipicolinate (acetylase route): step 3/3. In terms of biological role, catalyzes the conversion of N-acetyl-diaminopimelate to diaminopimelate and acetate. The polypeptide is N-acetyldiaminopimelate deacetylase (ykuR) (Bacillus subtilis (strain 168)).